Here is a 275-residue protein sequence, read N- to C-terminus: Dihydroxyacetone phosphatase (275 aa).

Residue aspartate 10 is the Nucleophile of the active site. Mg(2+)-binding residues include aspartate 10, aspartate 12, and aspartate 206. Residue aspartate 12 is the Proton donor/acceptor of the active site.

It belongs to the HAD-like hydrolase superfamily. Homohexamer. Requires Mg(2+) as cofactor.

It carries out the reaction dihydroxyacetone phosphate + H2O = dihydroxyacetone + phosphate. Functionally, catalyzes dephosphorylation of dihydroxyacetone phosphate (DHAP) to produce 1,3-dihydroxyacetone (DHA). Is the main enzyme responsible for DHA production from catabolism of sugars (glucose, fructose, and sucrose) in C.glutamicum. Displays no activity toward nucleoside monophosphates (AMP, CMP, GMP, or UMP). In Corynebacterium glutamicum (strain R), this protein is Dihydroxyacetone phosphatase.